A 209-amino-acid polypeptide reads, in one-letter code: APC/C-CDH1 modulator 1 (209 aa).

Residues 1–38 (MISPSKKRTILSSKNINQKPRAVVKGNELRSPSKRRSQ) form a disordered region. The residue at position 48 (serine 48) is a Phosphoserine. A Phosphothreonine modification is found at threonine 161. Serine 202 is modified (phosphoserine).

As to quaternary structure, interacts with CDH1, BMH1 and BMH2.

Functionally, negative regulator of GDH1, the activator protein that regulates the ubiquitin ligase activity and substrate specificity of the anaphase promoting complex/cyclosome (APC/C), and which is required for exit from mitosis, cytokinesis and formation of prereplicative complexes in G1. In Saccharomyces cerevisiae (strain ATCC 204508 / S288c) (Baker's yeast), this protein is APC/C-CDH1 modulator 1 (ACM1).